The chain runs to 230 residues: uncharacterized protein (230 aa).

2 disordered regions span residues threonine 63 to isoleucine 90 and lysine 194 to histidine 230. Residues lysine 194 to asparagine 217 are compositionally biased toward basic and acidic residues.

This is an uncharacterized protein from Caenorhabditis elegans.